The chain runs to 219 residues: MRMRKKPWARPELESCNFFIVNPKENKGKWKESFNNENPIYLELGCGKGVFVAVHGSNNENINYIAIDIKDEVLGLAKRNIEKAYKEKNKELNNIKLMAQEIGLINEMLDENDKISRIYINFCNPWPKKKHKKRRLTHTRQLTQYRNFLKENGEIWFKTDDDELFEESLEYFKEGKFRIEYITYDLHTSGFEGNVQTEHERMFTEQGIKTKFLIAIKED.

Residues E43, D68, E101, and N124 each contribute to the S-adenosyl-L-methionine site. Substrate is bound by residues K128 and D160.

The protein belongs to the class I-like SAM-binding methyltransferase superfamily. TrmB family.

The catalysed reaction is guanosine(46) in tRNA + S-adenosyl-L-methionine = N(7)-methylguanosine(46) in tRNA + S-adenosyl-L-homocysteine. It participates in tRNA modification; N(7)-methylguanine-tRNA biosynthesis. In terms of biological role, catalyzes the formation of N(7)-methylguanine at position 46 (m7G46) in tRNA. The protein is tRNA (guanine-N(7)-)-methyltransferase of Clostridium botulinum (strain Alaska E43 / Type E3).